We begin with the raw amino-acid sequence, 373 residues long: NADPH-dependent 3-keto-steroid reductase Hsd3b5 (373 aa).

NADP(+) contacts are provided by residues Gly-10–Leu-15, Tyr-155, and Lys-159. The active-site Proton donor is Lys-159. Residues Leu-288–Val-308 traverse the membrane as a helical segment. Residue Lys-350 is modified to N6-acetyllysine.

It belongs to the 3-beta-HSD family. In terms of tissue distribution, expressed in the male liver, starting in late puberty.

It localises to the endoplasmic reticulum membrane. The protein localises to the mitochondrion membrane. It carries out the reaction a 3beta-hydroxysteroid + NADP(+) = a 3-oxosteroid + NADPH + H(+). It catalyses the reaction 5alpha-androstane-3beta,17beta-diol + NADP(+) = 17beta-hydroxy-5alpha-androstan-3-one + NADPH + H(+). It functions in the pathway steroid metabolism. Its function is as follows. Responsible for the reduction of the oxo group on the C-3 of 5alpha-androstane steroids. Catalyzes the conversion of dihydrotestosterone to its inactive form 5alpha-androstanediol, that does not bind androgen receptor/AR. Does not function as an isomerase. The polypeptide is NADPH-dependent 3-keto-steroid reductase Hsd3b5 (Mus musculus (Mouse)).